A 360-amino-acid chain; its full sequence is Magnesium transporter NIPA2 (360 aa).

At M1–D9 the chain is on the extracellular side. A helical transmembrane segment spans residues F10–L30. Over K31 to E56 the chain is Cytoplasmic. A helical transmembrane segment spans residues W57 to Y77. A78 is a topological domain (extracellular). Residues F79–L99 form a helical membrane-spanning segment. Topologically, residues S100–R107 are cytoplasmic. A helical membrane pass occupies residues L108 to I128. Residues H129–P149 lie on the Extracellular side of the membrane. Residues G150–G170 form a helical membrane-spanning segment. Over P171–Q175 the chain is Cytoplasmic. The helical transmembrane segment at T176–A196 threads the bilayer. Topologically, residues K197–H215 are extracellular. The helical transmembrane segment at P216 to L236 threads the bilayer. Topologically, residues N237–S246 are cytoplasmic. Residues I247–L267 traverse the membrane as a helical segment. At F268–D278 the chain is on the extracellular side. The helical transmembrane segment at V279–F299 threads the bilayer. Residues K300 to F360 are Cytoplasmic-facing.

The protein belongs to the NIPA family.

It localises to the cell membrane. Its subcellular location is the early endosome. The enzyme catalyses Mg(2+)(in) = Mg(2+)(out). Its function is as follows. Acts as a selective Mg(2+) transporter. This is Magnesium transporter NIPA2 (NIPA2) from Bos taurus (Bovine).